Here is a 724-residue protein sequence, read N- to C-terminus: Probable metal-nicotianamine transporter YSL8 (724 aa).

The tract at residues 1–58 is disordered; sequence MRKGGLTPDRDRQIEEHELQETGISPDIERLKRNINATPYQREEEEEDREEQEESVEG. The segment covering 8–20 has biased composition (basic and acidic residues); that stretch reads PDRDRQIEEHELQ. Position 25 is a phosphoserine (serine 25). Acidic residues predominate over residues 43-56; the sequence is EEEEEDREEQEESV. 7 helical membrane-spanning segments follow: residues 72–92, 96–116, 144–164, 184–204, 245–265, 304–324, and 349–369; these read LTIR…FIVM, LTTG…FFFV, CVVA…LFAM, LGWM…SVVP, VLGK…FFTA, IINI…WPLI, and VFIA…KVLI. Residues 386–407 are disordered; that stretch reads RSSLAHKEDPPASPASPLTPRI. 8 helical membrane-spanning segments follow: residues 423–443, 455–475, 478–497, 501–520, 541–561, 603–623, 641–661, and 679–699; these read IPSW…TAIL, IIVI…GAGL, WSLA…AWAG, GGLL…VSTA, FVSQ…VFWL, LMLC…KDCL, FFLG…LFVW, and GLIC…IAGV.

Belongs to the YSL (TC 2.A.67.2) family.

Its subcellular location is the membrane. May be involved in the transport of nicotianamine-chelated metals. This Arabidopsis thaliana (Mouse-ear cress) protein is Probable metal-nicotianamine transporter YSL8 (YSL8).